A 251-amino-acid chain; its full sequence is MNALELEQILNHKLNSQAISDYAPNGLQVEGKKDIKKIITGVTASQALIEYAVSQNADAILVHHGYFWKSENPCIRGMKGKRIKTLLVNDINLYGYHLPLDVHPELGNNARLAALLEIEDLQPLEQGTVSIPVYGTLKTPLTSDAFAARIEQVLKRKPLVCSDNAPHLIRTVGICTGGGQSYIDLAANQGVDAFISGEVSEQTIHSAREQGIHFFAAGHHATERYGIKALGEWLSQHYDLEVEFKDIDNPA.

The a divalent metal cation site is built by His-63, His-64, Asp-101, His-219, and Glu-223.

Belongs to the GTP cyclohydrolase I type 2/NIF3 family. In terms of assembly, homohexamer.

The sequence is that of GTP cyclohydrolase 1 type 2 homolog from Pasteurella multocida (strain Pm70).